Reading from the N-terminus, the 813-residue chain is MQFPFSGAGPGVFTSSPALSLALADAVAGRNSGGGGKMVTAAHGGVGGGGGGGRAKARDALEVENEMSRSGSDHLDVVSCGDAGGGGGDDDDDEDAEHGNPPKRKKRYHRHTPQQIQELEAMFKECPHPDEKQRAELSKRLGLEPRQVKFWFQNRRTQMKMQLERHENSLLKQENDKLRSENLSIREATSNAVCVGCGGPAMLGEVSLEEHHLRVENARLKDELSRVCALAAKFLGKSISVMAPPQMHQPHPVPGSSLELAVGGIGSMPSATMPISTITDFAGAMSSSMGTVITPMKSEAEPSAMAGIDKSLFLELAMSAMDELVKMAQMGDPLWIPGASVPSSPAKESLNFEEYLNTFPPCIGVKPEGYVSEASRESGIVIIDDGAALVETLMDERRWSDMFSCMIAKASTTEEISTGVAGSRNGALLLVSDEHSVMQAELQVLSPLVPIREVKFLRFSKQLADGVWAVVDVSADELMRDQGITSASSTANMNCRRLPSGCVLQDTPNGFVKVTWVEHTEYDEASVHPLYRPLLRSGLALGAGRWIATLQRQCECLALLMSSIALPENDSSAIHPEGKRSMLKLARRMTDNFCAGVSTSSTREWSKLVGLTGNIGEDVHVMARKSVDEPGTPPGVVLSAATSVWMPVMPERLFNFLHNKGLRAEWDILSNGGPMQEVTSIAKGQQNGNTVCLLKASPTKDKQNSMLILQETCADASGSMVVYAPVDIPAMHLVMSGGDSSCVALLPSGFAILPAGPSIGADHKMGGSLLTVAFQILANSQPSAKLTVESVETVSNLISCTIKKIKTALHCDV.

The segment at 62 to 112 (EVENEMSRSGSDHLDVVSCGDAGGGGGDDDDDEDAEHGNPPKRKKRYHRHT) is disordered. Residues 101–112 (PPKRKKRYHRHT) show a composition bias toward basic residues. A DNA-binding region (homeobox) is located at residues 104–163 (RKKRYHRHTPQQIQELEAMFKECPHPDEKQRAELSKRLGLEPRQVKFWFQNRRTQMKMQL). A coiled-coil region spans residues 152 to 191 (FQNRRTQMKMQLERHENSLLKQENDKLRSENLSIREATSN). The START domain occupies 306 to 559 (AGIDKSLFLE…LQRQCECLAL (254 aa)).

It belongs to the HD-ZIP homeobox family. Class IV subfamily.

It is found in the nucleus. Functionally, probable transcription factor. The protein is Homeobox-leucine zipper protein ROC4 (ROC4) of Oryza sativa subsp. japonica (Rice).